A 2190-amino-acid chain; its full sequence is Integrator complex subunit 1 (2190 aa).

Residues 1–61 (MNRAKPTTVR…GLPSERKRDA (61 aa)) form a disordered region. Serine 13 is modified (phosphoserine). Polar residues predominate over residues 34–44 (GQANESKTAST). At lysine 47 the chain carries N6-acetyllysine. Threonine 83 carries the phosphothreonine modification. Serine 87, serine 307, and serine 924 each carry phosphoserine. Positions 922-945 (AASGEEDDEGESKEQKAKKRQRQQ) are disordered. The segment covering 923-932 (ASGEEDDEGE) has biased composition (acidic residues). The chain crosses the membrane as a helical span at residues 1159 to 1179 (TATMHILVVHAMVILLTLGPP). Positions 1311-1334 (SLPPRRDSTEAPKPKSSPEQPIGQ) are disordered. The span at 1314-1323 (PRRDSTEAPK) shows a compositional bias: basic and acidic residues. Phosphoserine occurs at positions 1318, 1326, 1327, and 1395.

It belongs to the Integrator subunit 1 family. Component of the Integrator complex, composed of core subunits INTS1, INTS2, INTS3, INTS4, INTS5, INTS6, INTS7, INTS8, INTS9/RC74, INTS10, INTS11/CPSF3L, INTS12, INTS13, INTS14 and INTS15. The core complex associates with protein phosphatase 2A subunits PPP2CA and PPP2R1A, to form the Integrator-PP2A (INTAC) complex. Interacts with ESRRB, ESRRB is not a core component of the Integrator complex and this association is a bridge for the interaction with the multiprotein complex Integrator; attracts the transcriptional machinery.

Its subcellular location is the nucleus. The protein localises to the nucleus membrane. Its function is as follows. Component of the integrator complex, a multiprotein complex that terminates RNA polymerase II (Pol II) transcription in the promoter-proximal region of genes. The integrator complex provides a quality checkpoint during transcription elongation by driving premature transcription termination of transcripts that are unfavorably configured for transcriptional elongation: the complex terminates transcription by (1) catalyzing dephosphorylation of the C-terminal domain (CTD) of Pol II subunit POLR2A/RPB1 and SUPT5H/SPT5, (2) degrading the exiting nascent RNA transcript via endonuclease activity and (3) promoting the release of Pol II from bound DNA. The integrator complex is also involved in terminating the synthesis of non-coding Pol II transcripts, such as enhancer RNAs (eRNAs), small nuclear RNAs (snRNAs), telomerase RNAs and long non-coding RNAs (lncRNAs). Within the integrator complex, INTS1 is involved in the post-termination step: INTS1 displaces INTS3 and the SOSS factors, allowing the integrator complex to return to the closed conformation, ready to bind to the paused elongation complex for another termination cycle. Mediates recruitment of cytoplasmic dynein to the nuclear envelope, probably as component of the integrator complex. The chain is Integrator complex subunit 1 from Homo sapiens (Human).